A 349-amino-acid polypeptide reads, in one-letter code: Methylthioribose-1-phosphate isomerase (349 aa).

Substrate is bound by residues 49–51 (RGA), arginine 93, and glutamine 201. Aspartate 242 (proton donor) is an active-site residue. Residue 252-253 (NK) coordinates substrate.

The protein belongs to the EIF-2B alpha/beta/delta subunits family. MtnA subfamily.

It catalyses the reaction 5-(methylsulfanyl)-alpha-D-ribose 1-phosphate = 5-(methylsulfanyl)-D-ribulose 1-phosphate. It functions in the pathway amino-acid biosynthesis; L-methionine biosynthesis via salvage pathway; L-methionine from S-methyl-5-thio-alpha-D-ribose 1-phosphate: step 1/6. Its function is as follows. Catalyzes the interconversion of methylthioribose-1-phosphate (MTR-1-P) into methylthioribulose-1-phosphate (MTRu-1-P). This is Methylthioribose-1-phosphate isomerase from Petrotoga mobilis (strain DSM 10674 / SJ95).